We begin with the raw amino-acid sequence, 279 residues long: Tryptophan 2,3-dioxygenase (279 aa).

Substrate-binding positions include 48–52 (FIVIH), tyrosine 110, and arginine 114. A heme-binding site is contributed by histidine 237. A substrate-binding site is contributed by threonine 251.

This sequence belongs to the tryptophan 2,3-dioxygenase family. In terms of assembly, homotetramer. Heme serves as cofactor.

The enzyme catalyses L-tryptophan + O2 = N-formyl-L-kynurenine. It functions in the pathway amino-acid degradation; L-tryptophan degradation via kynurenine pathway; L-kynurenine from L-tryptophan: step 1/2. Functionally, heme-dependent dioxygenase that catalyzes the oxidative cleavage of the L-tryptophan (L-Trp) pyrrole ring and converts L-tryptophan to N-formyl-L-kynurenine. Catalyzes the oxidative cleavage of the indole moiety. The sequence is that of Tryptophan 2,3-dioxygenase from Bacillus cereus (strain ATCC 10987 / NRS 248).